We begin with the raw amino-acid sequence, 87 residues long: Asparagine--tRNA ligase, cytoplasmic (87 aa).

The protein belongs to the class-II aminoacyl-tRNA synthetase family.

It localises to the cytoplasm. The enzyme catalyses tRNA(Asn) + L-asparagine + ATP = L-asparaginyl-tRNA(Asn) + AMP + diphosphate + H(+). This chain is Asparagine--tRNA ligase, cytoplasmic (DED81), found in Saccharomyces paradoxus (Yeast).